A 662-amino-acid chain; its full sequence is Transcription activator of gluconeogenesis NECHADRAFT_59099 (662 aa).

Residues 1–61 (MPHEMEENGA…KDPLRPRRKK (61 aa)) are disordered. 2 stretches are compositionally biased toward basic and acidic residues: residues 25–34 (TFLKDDEKMT) and 43–56 (TEVK…DPLR). Positions 66 to 94 (CFACQRAHLTCGDERPCQRCIKRGLADAC) form a DNA-binding region, zn(2)-C6 fungal-type. Disordered regions lie at residues 105 to 149 (LHDA…TGSN), 502 to 524 (YSGR…MTTP), and 580 to 606 (YRAP…SSRV). Polar residues-rich tracts occupy residues 121-130 (YNPTPTPSRT) and 137-149 (SSQS…TGSN). A PAS domain is found at 448-519 (TLVEYDDFLQ…TNTPDHNSQG (72 aa)). Over residues 582-593 (APQDPDQKEPGS) the composition is skewed to basic and acidic residues.

It belongs to the ERT1/acuK family.

The protein localises to the nucleus. Its function is as follows. Transcription factor which regulates nonfermentable carbon utilization. Activator of gluconeogenetic genes. The protein is Transcription activator of gluconeogenesis NECHADRAFT_59099 of Fusarium vanettenii (strain ATCC MYA-4622 / CBS 123669 / FGSC 9596 / NRRL 45880 / 77-13-4) (Fusarium solani subsp. pisi).